The sequence spans 104 residues: MGQAAKVLQLFKTLHRTRQQVFKNDARALEAARKKINEEFKCNKTETSPKKIEELIKIGSDVELILRTSVIQGIHTDHNTLKLVPRKDLLIENVPYCDAPTQKQ.

Position 60 is a phosphoserine (S60).

The protein belongs to the complex I LYR family. Interacts with UQCRFS1.

The protein localises to the mitochondrion matrix. In terms of biological role, assembly factor required for Rieske Fe-S protein UQCRFS1 incorporation into the cytochrome b-c1 (CIII) complex. Functions as a chaperone, binding to this subunit within the mitochondrial matrix and stabilizing it prior to its translocation and insertion into the late CIII dimeric intermediate within the mitochondrial inner membrane. The chain is Complex III assembly factor LYRM7 (LYRM7) from Bos taurus (Bovine).